The chain runs to 304 residues: GTPase Era (304 aa).

The Era-type G domain occupies 9 to 176 (KSGFVSIIGR…LLEITKHLSE (168 aa)). The tract at residues 17–24 (GRPNVGKS) is G1. 17-24 (GRPNVGKS) lines the GTP pocket. Residues 43–47 (QTTRN) are G2. The interval 64-67 (DTPG) is G3. GTP contacts are provided by residues 64–68 (DTPGI) and 126–129 (NKID). A G4 region spans residues 126 to 129 (NKID). A G5 region spans residues 155–157 (VSA). The KH type-2 domain occupies 199–285 (IREKVLHLTR…FLELWVKVQK (87 aa)).

The protein belongs to the TRAFAC class TrmE-Era-EngA-EngB-Septin-like GTPase superfamily. Era GTPase family. As to quaternary structure, monomer.

Its subcellular location is the cytoplasm. The protein localises to the cell membrane. An essential GTPase that binds both GDP and GTP, with rapid nucleotide exchange. Plays a role in 16S rRNA processing and 30S ribosomal subunit biogenesis and possibly also in cell cycle regulation and energy metabolism. This Halalkalibacterium halodurans (strain ATCC BAA-125 / DSM 18197 / FERM 7344 / JCM 9153 / C-125) (Bacillus halodurans) protein is GTPase Era.